The chain runs to 524 residues: Probable plastidic glucose transporter 1 (524 aa).

12 consecutive transmembrane segments (helical) span residues 88 to 108 (MANF…VSIA), 122 to 142 (LVVS…GPLV), 151 to 171 (FQIF…AHSL), 179 to 199 (FLVG…ISEV), 208 to 228 (LGTL…LLGI), 239 to 259 (TMLY…QFAV), 320 to 340 (VAFI…NGVL), 357 to 377 (QASL…SYLI), 386 to 406 (LIGS…AVGF), 420 to 440 (GTLM…GLII), 452 to 472 (IMGF…LFFL), and 483 to 503 (VYAS…LFTV).

It belongs to the major facilitator superfamily. Sugar transporter (TC 2.A.1.1) family.

It is found in the plastid. It localises to the chloroplast membrane. May be involved in the efflux of glucose towards the cytosol. This is Probable plastidic glucose transporter 1 from Arabidopsis thaliana (Mouse-ear cress).